Reading from the N-terminus, the 704-residue chain is Elongation factor G (704 aa).

One can recognise a tr-type G domain in the interval Ala8–Thr290. GTP is bound by residues Ala17 to Thr24, Asp88 to His92, and Asn142 to Asp145.

It belongs to the TRAFAC class translation factor GTPase superfamily. Classic translation factor GTPase family. EF-G/EF-2 subfamily.

It is found in the cytoplasm. Catalyzes the GTP-dependent ribosomal translocation step during translation elongation. During this step, the ribosome changes from the pre-translocational (PRE) to the post-translocational (POST) state as the newly formed A-site-bound peptidyl-tRNA and P-site-bound deacylated tRNA move to the P and E sites, respectively. Catalyzes the coordinated movement of the two tRNA molecules, the mRNA and conformational changes in the ribosome. This is Elongation factor G from Pectobacterium atrosepticum (strain SCRI 1043 / ATCC BAA-672) (Erwinia carotovora subsp. atroseptica).